We begin with the raw amino-acid sequence, 328 residues long: Versiconal hemiacetal acetate esterase (328 aa).

Positions 82–84 match the Involved in the stabilization of the negatively charged intermediate by the formation of the oxyanion hole motif; it reads HGG. Active-site residues include serine 156, aspartate 260, and histidine 290.

The protein belongs to the 'GDXG' lipolytic enzyme family.

It catalyses the reaction (2S,3S)-versiconal hemiacetal acetate + H2O = (2S-3S)-versiconal hemiacetal + acetate + H(+). The catalysed reaction is (3S)-versiconol acetate + H2O = (S)-versiconol + acetate + H(+). It participates in mycotoxin biosynthesis. Functionally, versiconal hemiacetal acetate esterase; part of the fragmented gene cluster that mediates the biosynthesis of dothistromin (DOTH), a polyketide toxin very similar in structure to the aflatoxin precursor, versicolorin B. The first step of the pathway is the conversion of acetate to norsolorinic acid (NOR) and requires the fatty acid synthase subunits hexA and hexB, as well as the polyketide synthase pksA. PksA combines a hexanoyl starter unit and 7 malonyl-CoA extender units to synthesize the precursor NOR. The hexanoyl starter unit is provided to the acyl-carrier protein (ACP) domain by the fungal fatty acid synthase hexA/hexB. The second step is the conversion of NOR to averantin (AVN) and requires the norsolorinic acid ketoreductase nor1, which catalyzes the dehydration of norsolorinic acid to form (1'S)-averantin. The cytochrome P450 monooxygenase avnA then catalyzes the hydroxylation of AVN to 5'hydroxyaverantin (HAVN). The next step is performed by adhA that transforms HAVN to averufin (AVF). Averufin might then be converted to hydroxyversicolorone by cypX and avfA. Hydroxyversicolorone is further converted versiconal hemiacetal acetate (VHA) by moxY. VHA is then the substrate for the versiconal hemiacetal acetate esterase est1 to yield versiconal (VAL). Versicolorin B synthase vbsA then converts VAL to versicolorin B (VERB) by closing the bisfuran ring. Then, the activity of the versicolorin B desaturase verB leads to versicolorin A (VERA). DotB, a predicted chloroperoxidase, may perform epoxidation of the A-ring of VERA. Alternatively, a cytochrome P450, such as cypX or avnA could catalyze this step. It is also possible that another, uncharacterized, cytochrome P450 enzyme is responsible for this step. Opening of the epoxide could potentially be achieved by the epoxide hydrolase epoA. However, epoA seems not to be required for DOTH biosynthesis, but other epoxide hydrolases may have the ability to complement this hydrolysis. Alternatively, opening of the epoxide ring could be achieved non-enzymatically. The next step is the deoxygenation of ring A to yield the 5,8-dihydroxyanthraquinone which is most likely catalyzed by the NADPH dehydrogenase encoded by ver1. The last stages of DOTH biosynthesis are proposed to involve hydroxylation of the bisfuran. OrdB and norB might have oxidative roles here. An alternative possibility is that cytochrome P450 monoogenases such as avnA and cypX might perform these steps in addition to previously proposed steps. The sequence is that of Versiconal hemiacetal acetate esterase from Dothistroma septosporum (strain NZE10 / CBS 128990) (Red band needle blight fungus).